A 504-amino-acid chain; its full sequence is Histidine ammonia-lyase (504 aa).

The 5-imidazolinone (Ala-Gly) cross-link spans 142–144 (ASG). At S143 the chain carries 2,3-didehydroalanine (Ser).

The protein belongs to the PAL/histidase family. Post-translationally, contains an active site 4-methylidene-imidazol-5-one (MIO), which is formed autocatalytically by cyclization and dehydration of residues Ala-Ser-Gly.

It localises to the cytoplasm. It catalyses the reaction L-histidine = trans-urocanate + NH4(+). Its pathway is amino-acid degradation; L-histidine degradation into L-glutamate; N-formimidoyl-L-glutamate from L-histidine: step 1/3. This Staphylococcus aureus (strain MRSA252) protein is Histidine ammonia-lyase.